The following is a 74-amino-acid chain: U3-agatoxin-Ao1h (74 aa).

The N-terminal stretch at 1–20 (MRAIISLLLISTMVFGVIEA) is a signal peptide. Residues 21–34 (VSVQKSLKIFEGER) constitute a propeptide that is removed on maturation. Cystine bridges form between cysteine 37–cysteine 53, cysteine 44–cysteine 58, cysteine 52–cysteine 68, and cysteine 60–cysteine 66. Asparagine 72 is modified (asparagine amide).

It belongs to the neurotoxin 07 (Beta/delta-agtx) family. 03 (aga-4) subfamily. Aga sub-subfamily. Expressed by the venom gland.

The protein resides in the secreted. In terms of biological role, insecticidal neurotoxin that induces an irreversible spastic paralysis when injected into insects. Modifies presynaptic voltage-gated sodium channels (Nav), causing them to open at the normal resting potential of the nerve. This leads to spontaneous release of neurotransmitter and repetitive action potentials in motor neurons. The protein is U3-agatoxin-Ao1h of Agelena orientalis (Funnel-web spider).